Reading from the N-terminus, the 94-residue chain is MSRSVKKGAYVHVRLLKKIERLNQKGEKQIIKTWARSSTIVPAMVGHTLAVYNGKTHIPVFITDALVGHKLGEFAPTRNFRSHVKGDRKIRKSI.

This sequence belongs to the universal ribosomal protein uS19 family.

It localises to the plastid. The protein localises to the chloroplast. Functionally, protein S19 forms a complex with S13 that binds strongly to the 16S ribosomal RNA. The sequence is that of Small ribosomal subunit protein uS19c from Cyanidioschyzon merolae (strain NIES-3377 / 10D) (Unicellular red alga).